The sequence spans 551 residues: Seventh homolog of septin 1 (551 aa).

Ser2 bears the N-acetylserine mark. The Septin-type G domain maps to 20 to 339 (RGITYTMLLC…ENYRSEKLSS (320 aa)). Residues 30-37 (GPAGTGKT) form a G1 motif region. Residues 30-37 (GPAGTGKT), Gly138, 218-226 (RADSFTKEE), and Arg288 contribute to the GTP site. Residues 135–138 (MTHG) are G3 motif. Positions 217-220 (TRAD) are G4 motif. Residues 381–417 (NLRADTPRNQVSGNFKENEYEDNGEHDSAENEQEMSP) are disordered. At Tyr400 the chain carries Phosphotyrosine. Ser408 and Ser416 each carry phosphoserine. The stretch at 418-518 (VRQLGREIKQ…KLINQNKLNG (101 aa)) forms a coiled coil. Residues Lys426 and Lys437 each participate in a glycyl lysine isopeptide (Lys-Gly) (interchain with G-Cter in SUMO) cross-link. Phosphoserine is present on residues Ser447, Ser460, Ser519, Ser520, Ser522, and Ser525. The interval 515-551 (KLNGSSSSINSLQQSTRSQIKKNDTYTDLASIASGRD) is disordered. The span at 519 to 532 (SSSSINSLQQSTRS) shows a compositional bias: low complexity. Thr539 is modified (phosphothreonine). A phosphoserine mark is found at Ser545 and Ser548.

It belongs to the TRAFAC class TrmE-Era-EngA-EngB-Septin-like GTPase superfamily. Septin GTPase family. Component of the septin complex which consists of CDC3, CDC10, CDC11, CDC12 and probably SHS1 and rearranges to a cortical collar of highly ordered filaments at the mother-bud-neck. A complex formed by CDC3, CDC10, CDC11 and CDC12 is capable of forming long filaments in vitro and the components seem to be present in a 2:2:2:2 arrangement in vivo. The filaments are proposed to be formed by the end-to-end polymerization of CDC3-CDC12-CDC11 complexes with CDC10 serving as a bridge to bundle the polymers into paired filaments. Component of the GIN4 complex composed of at least BNI5, CDC3, CDC10, CDC11, CDC12, GIN4, NAP1 and SHS1. Self-associates. Interacts with CDC11 and SPA2. Phosphorylated by GIN4 and CLA4. Phosphorylation state is essential for septin ring dynamics during telophase. In terms of processing, sumoylated during mitosis on the mother cell side of the bud neck. Sumoylation probably plays a central role in regulating septin ring disassembly during the cell cycle.

The protein resides in the membrane. The protein localises to the bud neck. Septins are GTPases involved in cytokinesis that assemble early in the cell cycle as a patch at the incipient bud site and form a ring approximately 15 minutes before bud emergence, which transforms into an hour-glass shaped collar of cortical filaments that spans both sides of the mother-bud neck. This collar persists until just before cytokinesis, when it splits into two rings that occupy opposite sides of the neck. The septins at the bud neck serve as a structural scaffold that recruits different components involved in diverse processes at specific stages during the cell cycle. Many proteins bind asymmetrically to the septin collar. The septin assembly is regulated by protein kinases GIN4 and/or CLA4. May act by recruiting MYO1 and HOF1, a protein involved in septation, to the site of cleavage. Septins are also involved in cell morphogenesis, bud site selection, chitin deposition, cell cycle regulation, cell compartmentalization and spore wall formation. CDCd11 with SHS1 11 are involved in the recruitment of BNI5 and thereby ensure efficient localization at the bud neck of MYO1, the type II myosin of the actomyosin contractile ring. The sequence is that of Seventh homolog of septin 1 from Saccharomyces cerevisiae (strain ATCC 204508 / S288c) (Baker's yeast).